A 336-amino-acid chain; its full sequence is Glycerol-3-phosphate dehydrogenase [NAD(P)+] (336 aa).

Residues Ser-11, Trp-12, Arg-32, and Lys-106 each coordinate NADPH. Sn-glycerol 3-phosphate contacts are provided by Lys-106 and Gly-136. Ala-140 is a binding site for NADPH. Sn-glycerol 3-phosphate is bound by residues Lys-191, Asp-244, Ser-254, Arg-255, and Asn-256. Lys-191 (proton acceptor) is an active-site residue. Arg-255 is an NADPH binding site. The NADPH site is built by Val-279 and Glu-281.

The protein belongs to the NAD-dependent glycerol-3-phosphate dehydrogenase family.

The protein localises to the cytoplasm. It catalyses the reaction sn-glycerol 3-phosphate + NAD(+) = dihydroxyacetone phosphate + NADH + H(+). It carries out the reaction sn-glycerol 3-phosphate + NADP(+) = dihydroxyacetone phosphate + NADPH + H(+). It participates in membrane lipid metabolism; glycerophospholipid metabolism. Functionally, catalyzes the reduction of the glycolytic intermediate dihydroxyacetone phosphate (DHAP) to sn-glycerol 3-phosphate (G3P), the key precursor for phospholipid synthesis. The protein is Glycerol-3-phosphate dehydrogenase [NAD(P)+] of Frankia casuarinae (strain DSM 45818 / CECT 9043 / HFP020203 / CcI3).